The primary structure comprises 479 residues: Glucagon receptor (479 aa).

Positions 1 to 25 (MPPARLRHPHLLLLLLLACQPQAPA) are cleaved as a signal peptide. Residues 26–136 (AQAMDFLFQK…ELGVQREVAE (111 aa)) are Extracellular-facing. 3 cysteine pairs are disulfide-bonded: Cys43/Cys67, Cys58/Cys100, and Cys81/Cys121. 5 N-linked (GlcNAc...) asparagine glycosylation sites follow: Asn46, Asn59, Asn74, Asn78, and Asn117. The chain crosses the membrane as a helical span at residues 137-161 (MYSSFQAMYTAGYSLSLAALLLALA). At 162 to 173 (ILLGLSKLHCTR) the chain is on the cytoplasmic side. The helical transmembrane segment at 174 to 198 (NYIHANLLASFVLRASSVLALDALL) threads the bilayer. At 199-225 (KTRYSQRLGDDLSVSIWLSDEAVAGCR) the chain is on the extracellular side. An intrachain disulfide couples Cys224 to Cys294. Residues 226–249 (VAAVFMQYGVVANYCWLLVEGVYL) traverse the membrane as a helical segment. Topologically, residues 250–263 (HSLLRQATIPERSC) are cytoplasmic. A helical transmembrane segment spans residues 264-285 (FPLYLAIGWGAPMLFVIPWAVV). Residues 286–303 (KCLFENIQCWTSNDNMGF) lie on the Extracellular side of the membrane. The chain crosses the membrane as a helical span at residues 304–326 (WWILRFPVFLAILINFSIFIRVL). Residues 327–350 (HVLVAKLRAHQMRCTDYKFRLARS) lie on the Cytoplasmic side of the membrane. The helical transmembrane segment at 351–369 (TLTLIPLLGVHEVVFAFVT) threads the bilayer. The Extracellular segment spans residues 370 to 381 (DEHAQGALRSAK). A helical transmembrane segment spans residues 382–402 (LFFDLFLSSFQGLLVAVLYCF). At 403–479 (LNKEVQAELL…GLPGVAENPF (77 aa)) the chain is on the cytoplasmic side. The disordered stretch occupies residues 426-479 (KAHRVGSHSARPPSGPPSEKLLLSTGGSSNGTSQEPSAETHLASGLPGVAENPF). A compositionally biased stretch (low complexity) spans 446–458 (LLLSTGGSSNGTS). Position 458 is a phosphoserine (Ser458).

The protein belongs to the G-protein coupled receptor 2 family. Post-translationally, ligand-binding promotes phosphorylation of serine residues in the C-terminal cytoplasmic domain. Phosphorylation is important for receptor endocytosis after ligand-binding.

It localises to the cell membrane. Functionally, G-protein coupled receptor for glucagon that plays a central role in the regulation of blood glucose levels and glucose homeostasis. Regulates the rate of hepatic glucose production by promoting glycogen hydrolysis and gluconeogenesis. Plays an important role in mediating the responses to fasting. Ligand binding causes a conformation change that triggers signaling via guanine nucleotide-binding proteins (G proteins) and modulates the activity of down-stream effectors, such as adenylate cyclase. Promotes activation of adenylate cyclase. Besides, plays a role in signaling via a phosphatidylinositol-calcium second messenger system. The polypeptide is Glucagon receptor (Sus scrofa (Pig)).